The sequence spans 299 residues: HTH-type transcriptional regulator ArgP (299 aa).

In terms of domain architecture, HTH lysR-type spans 4 to 60 (PDYRTLQALDAVIRERGFERAAQKLCITQSAVSQRIKQLENMFGQPLLVRTVPPRPT). The segment at residues 21–40 (FERAAQKLCITQSAVSQRIK) is a DNA-binding region (H-T-H motif).

Belongs to the LysR transcriptional regulatory family. As to quaternary structure, homodimer.

Controls the transcription of genes involved in arginine and lysine metabolism. In Erwinia tasmaniensis (strain DSM 17950 / CFBP 7177 / CIP 109463 / NCPPB 4357 / Et1/99), this protein is HTH-type transcriptional regulator ArgP.